Reading from the N-terminus, the 249-residue chain is UPF0246 protein Lreu_0493 (249 aa).

This sequence belongs to the UPF0246 family.

In Limosilactobacillus reuteri (strain DSM 20016) (Lactobacillus reuteri), this protein is UPF0246 protein Lreu_0493.